Reading from the N-terminus, the 277-residue chain is Myelin proteolipid protein (277 aa).

Over 2-10 the chain is Cytoplasmic; the sequence is GLLECCARC. 3 S-palmitoyl cysteine lipidation sites follow: C6, C7, and C10. Residues 11–36 form a helical membrane-spanning segment; sequence LIGAPFASLVATGLCFFGVALFCGCG. Over 37 to 59 the chain is Extracellular; it reads HEALTGTEQLIETYFSKNYQDYE. The chain crosses the membrane as a helical span at residues 60 to 88; sequence FLIDVIHGFQYFIYGTAAFFFLYGALLLA. Residues 89–151 lie on the Cytoplasmic side of the membrane; that stretch reads EGFYTTGAVR…LGKWLGHPDK (63 aa). S-palmitoyl cysteine attachment occurs at residues C109, C139, and C141. Residues 152–178 form a helical membrane-spanning segment; the sequence is FVGITYVLTIIWLLVFACSAVPVYIYF. Topologically, residues 179–238 are extracellular; sequence NTWTTCQSIGNPTKTSASIGTLCADARMYGILPWNAFPGKVCGSNLLSICKTSEFQMTFH. 2 disulfide bridges follow: C184–C228 and C201–C220. A lipid anchor (O-palmitoyl threonine) is attached at T199. Residues 239–268 form a helical membrane-spanning segment; it reads LFIAAFVGAAATLVSLVTFIIATTYNFAVL. Over 269–277 the chain is Cytoplasmic; sequence RLMGRGTKF.

It belongs to the myelin proteolipid protein family.

It localises to the cell membrane. In terms of biological role, this is the major myelin protein from the central nervous system. It plays an important role in the formation or maintenance of the multilamellar structure of myelin. The sequence is that of Myelin proteolipid protein (PLP1) from Taeniopygia guttata (Zebra finch).